The sequence spans 458 residues: Ig mu chain C region secreted form (458 aa).

The interval 1–106 (VSLSSPTLYP…SNRDLRVSFP (106 aa)) is CH1. An intrachain disulfide couples Cys-28 to Cys-90. N-linked (GlcNAc...) asparagine glycans are attached at residues Asn-46 and Asn-114. Positions 107–222 (VDSELPPNVS…VSMSSECSTT (116 aa)) are CH2. A disulfide bridge connects residues Cys-137 and Cys-200. Residues Asn-212, Asn-261, Asn-277, and Asn-284 are each glycosylated (N-linked (GlcNAc...) asparagine). The interval 223-327 (PSPGIQVFPI…PLKHTISKSR (105 aa)) is CH3. 2 disulfide bridges follow: Cys-249–Cys-308 and Cys-356–Cys-418. Positions 328–458 (EVAKHPPAVY…IMSDTASTCY (131 aa)) are CH4. An N-linked (GlcNAc...) asparagine glycan is attached at Asn-445.

The protein resides in the secreted. The polypeptide is Ig mu chain C region secreted form (Oryctolagus cuniculus (Rabbit)).